Here is a 287-residue protein sequence, read N- to C-terminus: Large ribosomal subunit protein uL2 (287 aa).

The disordered stretch occupies residues 221–287 (RGSVMNPCDH…SKRSRGGRDS (67 aa)). The segment covering 258–287 (KTRKRNKPSNKFVLRKRRKTSKRSRGGRDS) has biased composition (basic residues).

Belongs to the universal ribosomal protein uL2 family. As to quaternary structure, part of the 50S ribosomal subunit. Forms a bridge to the 30S subunit in the 70S ribosome.

Functionally, one of the primary rRNA binding proteins. Required for association of the 30S and 50S subunits to form the 70S ribosome, for tRNA binding and peptide bond formation. It has been suggested to have peptidyltransferase activity; this is somewhat controversial. Makes several contacts with the 16S rRNA in the 70S ribosome. This is Large ribosomal subunit protein uL2 from Synechococcus sp. (strain WH7803).